A 240-amino-acid chain; its full sequence is Probable septum site-determining protein MinC (240 aa).

Belongs to the MinC family. In terms of assembly, interacts with MinD and FtsZ.

Cell division inhibitor that blocks the formation of polar Z ring septums. Rapidly oscillates between the poles of the cell to destabilize FtsZ filaments that have formed before they mature into polar Z rings. Prevents FtsZ polymerization. This chain is Probable septum site-determining protein MinC, found in Chromobacterium violaceum (strain ATCC 12472 / DSM 30191 / JCM 1249 / CCUG 213 / NBRC 12614 / NCIMB 9131 / NCTC 9757 / MK).